The following is a 2262-amino-acid chain: Klarsicht protein (2262 aa).

Disordered stretches follow at residues 1–140 (MEMQ…VGND), 345–410 (QQQQ…GEGN), 442–475 (AANG…LNEV), 514–561 (QSQS…PDIG), 800–832 (ATSS…DKEN), 859–898 (SNYD…QLQM), 1000–1031 (HLPP…VSPV), 1115–1157 (PSCK…SEGF), 1246–1316 (SGLA…ELGG), and 1533–1670 (VRRK…QQSR). The required for apical microtubules localization stretch occupies residues 1–1774 (MEMQQENETG…KPTPELLDTE (1774 aa)). Topologically, residues 1–2215 (MEMQQENETG…KRGWAWRIAR (2215 aa)) are cytoplasmic. Residues 58-67 (KIEHTTKPLK) are compositionally biased toward basic and acidic residues. A compositionally biased stretch (polar residues) spans 131–140 (NYGTNSVGND). Residues 345 to 402 (QQQQLSSQQPASLTSNCSSESTSESATKSSSLSSGFASDPVTTPIGTAAAAPPSSSTH) are compositionally biased toward low complexity. Positions 446–475 (LDDDEDEEEDTEDDSFGYEGEATEDDLNEV) are enriched in acidic residues. Residues 514 to 525 (QSQSRSQQVPSQ) are compositionally biased toward low complexity. A compositionally biased stretch (acidic residues) spans 546–560 (EADEELEEEDEDPDI). Low complexity-rich tracts occupy residues 809–818 (STAVSSTTAT) and 859–881 (SNYD…SNSN). Polar residues predominate over residues 882–894 (GRLTETSATSRVT). Positions 1006-1018 (PAKSAKSTKSQAS) are enriched in low complexity. Residues 1019 to 1028 (NATVSGSTLV) show a composition bias toward polar residues. Residues 1246–1259 (SGLASHSISESALD) are compositionally biased toward polar residues. A compositionally biased stretch (low complexity) spans 1267–1280 (PRAASSSGTGSNAA). A compositionally biased stretch (basic residues) spans 1288 to 1299 (SLRRRKARKKRI). The segment covering 1550–1559 (QSDQQQQQLQ) has biased composition (low complexity). Residues 1560–1583 (VTPSLSASATALMTTPKNQSTSHQ) are compositionally biased toward polar residues. Basic and acidic residues-rich tracts occupy residues 1586–1596 (HRAESVGRKLD) and 1610–1640 (RTSE…EKCI). Residues 1809–1842 (LTKQERRLQSALEEQEQQQESEQLKQQKLVEEEK) are a coiled coil. The interval 2092–2205 (HQQKQQIQQN…GEGADPAQTS (114 aa)) is disordered. The segment covering 2093–2105 (QQKQQIQQNQTQQ) has biased composition (low complexity). Residues 2130–2142 (RRGKGARKARQAK) are compositionally biased toward basic residues. The 56-residue stretch at 2207–2262 (RGWAWRIARAAVPMQVALFTIFCAACLMQPNCCDNLNNLSMSFTPQLRYIRGPPPI) folds into the KASH domain. A helical; Anchor for type IV membrane protein transmembrane segment spans residues 2216–2236 (AAVPMQVALFTIFCAACLMQP). At 2237-2262 (NCCDNLNNLSMSFTPQLRYIRGPPPI) the chain is on the perinuclear space side.

This sequence belongs to the nesprin family. As to quaternary structure, core component of LINC complexes which are composed of inner nuclear membrane SUN domain-containing proteins coupled to outer nuclear membrane KASH domain-containing nesprins. Interacts with kud. Interacts with Msp300; this interaction allows the anchoring of Msp300 nuclear ring structure to the nuclear envelope. In terms of tissue distribution, expressed ubiquitously in the eye disk, but at much higher levels posterior to the morphogenetic furrow. Expressed in R-cells and also in non-neural cone cells.

It is found in the cytoplasm. It localises to the cytoskeleton. Its subcellular location is the microtubule organizing center. The protein localises to the perinuclear region. The protein resides in the nucleus membrane. It is found in the nucleus envelope. Component of the LINC (LInker of Nucleoskeleton and Cytoskeleton) complex involved in the connection between the nuclear lamina and the cytoskeleton. Plays a role in the nuclear positioning and links the nucleus to the microtubule organizing center (MTOC). Collaborates with Klar to promote even spacing of the myonuclei at the periphery of striated muscle fibers by mediating a tight association between a nuclear ring structure of Msp300 and the plus ends of a unique astral microtubule (MT) network. In Drosophila melanogaster (Fruit fly), this protein is Klarsicht protein.